Reading from the N-terminus, the 444-residue chain is Divalent metal cation transporter MntH (444 aa).

A run of 11 helical transmembrane segments spans residues 39–59 (LLFA…GNFA), 69–89 (GYTL…FQAL), 109–128 (FSRP…AMAT), 146–166 (LPLI…LLFE), 175–195 (LVIG…MFIA), 215–235 (TALT…AVYL), 264–284 (VILA…MAAS), 304–324 (TPLL…TSGI), 346–366 (IPVW…ILAG), 372–392 (ALVI…IALI), and 417–437 (AAAI…GFTI).

This sequence belongs to the NRAMP family.

It is found in the cell inner membrane. In terms of biological role, h(+)-stimulated, divalent metal cation uptake system. The chain is Divalent metal cation transporter MntH from Granulibacter bethesdensis (strain ATCC BAA-1260 / CGDNIH1).